A 156-amino-acid polypeptide reads, in one-letter code: ATP synthase subunit b (156 aa).

A helical membrane pass occupies residues 3–23; the sequence is ITLTIFAQALAFAGLIWIVAT.

The protein belongs to the ATPase B chain family. As to quaternary structure, F-type ATPases have 2 components, F(1) - the catalytic core - and F(0) - the membrane proton channel. F(1) has five subunits: alpha(3), beta(3), gamma(1), delta(1), epsilon(1). F(0) has three main subunits: a(1), b(2) and c(10-14). The alpha and beta chains form an alternating ring which encloses part of the gamma chain. F(1) is attached to F(0) by a central stalk formed by the gamma and epsilon chains, while a peripheral stalk is formed by the delta and b chains.

Its subcellular location is the cell inner membrane. F(1)F(0) ATP synthase produces ATP from ADP in the presence of a proton or sodium gradient. F-type ATPases consist of two structural domains, F(1) containing the extramembraneous catalytic core and F(0) containing the membrane proton channel, linked together by a central stalk and a peripheral stalk. During catalysis, ATP synthesis in the catalytic domain of F(1) is coupled via a rotary mechanism of the central stalk subunits to proton translocation. Its function is as follows. Component of the F(0) channel, it forms part of the peripheral stalk, linking F(1) to F(0). This is ATP synthase subunit b from Xanthomonas axonopodis pv. citri (strain 306).